A 178-amino-acid chain; its full sequence is CDP-diacylglycerol--glycerol-3-phosphate 3-phosphatidyltransferase (178 aa).

4 consecutive transmembrane segments (helical) span residues 5-25 (PNYL…LFYI), 32-52 (KLGA…GYIA), 61-81 (FGKM…TIML), and 145-165 (IIYL…LTII).

It belongs to the CDP-alcohol phosphatidyltransferase class-I family.

Its subcellular location is the cell membrane. The catalysed reaction is a CDP-1,2-diacyl-sn-glycerol + sn-glycerol 3-phosphate = a 1,2-diacyl-sn-glycero-3-phospho-(1'-sn-glycero-3'-phosphate) + CMP + H(+). It participates in phospholipid metabolism; phosphatidylglycerol biosynthesis; phosphatidylglycerol from CDP-diacylglycerol: step 1/2. This protein catalyzes the committed step to the synthesis of the acidic phospholipids. The protein is CDP-diacylglycerol--glycerol-3-phosphate 3-phosphatidyltransferase (pgsA) of Rickettsia typhi (strain ATCC VR-144 / Wilmington).